Here is a 56-residue protein sequence, read N- to C-terminus: Large ribosomal subunit protein bL32 (56 aa).

The segment at 1 to 26 (MAVQQNKKSRSKRGMRRSHDALSTAQ) is disordered. Residues 7-16 (KKSRSKRGMR) are compositionally biased toward basic residues.

Belongs to the bacterial ribosomal protein bL32 family.

This is Large ribosomal subunit protein bL32 from Shewanella denitrificans (strain OS217 / ATCC BAA-1090 / DSM 15013).